A 292-amino-acid chain; its full sequence is Forkhead box protein R1 (292 aa).

Disordered stretches follow at residues 31-50 (PPKLPLEKKPNPDKDGPDYE) and 65-166 (PGKL…ASSQ). Composition is skewed to basic and acidic residues over residues 35-47 (PLEKKPNPDKDGP) and 70-79 (VSGRRKREDL). The span at 80 to 89 (TSTLPSSQPP) shows a compositional bias: polar residues. A compositionally biased stretch (acidic residues) spans 129–140 (LTEEEEAEDQED). Basic residues predominate over residues 149 to 161 (PHKRAPLQSRRLR). Residues 173–272 (RPPLNYFHLI…EEARALASTR (100 aa)) constitute a DNA-binding region (fork-head).

As to expression, expressed in testis (at protein level).

The protein localises to the nucleus. It is found in the cytoplasm. Its subcellular location is the perinuclear region. In terms of biological role, transcription factor which acts as both an activator and a repressor. Activates transcription of a number of genes including the heat shock chaperones HSPA1A and HSPA6 and the antioxidant NADPH-dependent reductase DHRS2 which are involved in protection against oxidative stress. Required for normal brain development. The protein is Forkhead box protein R1 (FOXR1) of Homo sapiens (Human).